The sequence spans 205 residues: Small heat shock protein hspG12 (205 aa).

Positions 35-205 constitute a sHSP domain; the sequence is KTIIDILPPM…YSNTIKININ (171 aa). A disordered region spans residues 99–147; sequence PSLLDTKEDEASIEEFDEDDIKPKSTETTSTLSNSKENKKDENKSKSTE. Acidic residues predominate over residues 109–118; it reads ASIEEFDEDD. Residues 134–147 are compositionally biased toward basic and acidic residues; it reads KENKKDENKSKSTE.

The protein belongs to the small heat shock protein (HSP20) family.

In Dictyostelium discoideum (Social amoeba), this protein is Small heat shock protein hspG12 (hspG12).